Here is a 147-residue protein sequence, read N- to C-terminus: MPTINQLVRKPRKSKIEKSDSPALNIGYNSHKKVQTKMAAPQKRGVATRVGTMTPKKPNSALRKFARVRLSNLIEVTAYIPGIGHNLQEHSVVLIRGGRVKDLPGVRYHIVRGALDTAGVADRNKAVLNTGRNVQKDNRRGIRENES.

The interval 1 to 22 (MPTINQLVRKPRKSKIEKSDSP) is disordered. D102 is modified (3-methylthioaspartic acid).

It belongs to the universal ribosomal protein uS12 family. In terms of assembly, part of the 30S ribosomal subunit. Contacts proteins S8 and S17. May interact with IF1 in the 30S initiation complex.

In terms of biological role, with S4 and S5 plays an important role in translational accuracy. Functionally, interacts with and stabilizes bases of the 16S rRNA that are involved in tRNA selection in the A site and with the mRNA backbone. Located at the interface of the 30S and 50S subunits, it traverses the body of the 30S subunit contacting proteins on the other side and probably holding the rRNA structure together. The combined cluster of proteins S8, S12 and S17 appears to hold together the shoulder and platform of the 30S subunit. This Streptococcus pyogenes serotype M12 (strain MGAS2096) protein is Small ribosomal subunit protein uS12.